Reading from the N-terminus, the 1857-residue chain is Phosphatidylinositol 3-kinase 2 (1857 aa).

Low complexity-rich tracts occupy residues 1 to 32 (MKMSEGIISPLSLSSESSEQQQAAIRKFSNGS) and 42 to 55 (NLSVNSSNSGSNNS). 5 disordered regions span residues 1-61 (MKMS…KSST), 145-313 (TPLN…TNRV), 348-468 (SSSK…NSIR), 481-512 (ISSNGIPSSPGQVSNKDYNNIGNLSNSSGERV), and 530-573 (ESDI…GPNV). Residues 145–155 (TPLNRSRSGSI) are compositionally biased toward polar residues. A compositionally biased stretch (low complexity) spans 162 to 269 (NNLTSSSSSS…NNNNNNNSNS (108 aa)). The span at 270–281 (GGSSRMITSKSQ) shows a compositional bias: polar residues. Composition is skewed to low complexity over residues 288-311 (TSNTAATTTTTTTTNTSAPTTPTN) and 352-464 (LLIP…QPSN). Over residues 533–560 (ISSSPRSIGSPNSIRASISSQLPPSLSS) the composition is skewed to low complexity. The span at 561–570 (IGGGGGGGSG) shows a compositional bias: gly residues. Residues 821–934 (PNKITIMVLL…NQTVELSLTN (114 aa)) form the PI3K-RBD domain. The interval 996–1078 (KETNKENKDS…SGSGNGSEQP (83 aa)) is disordered. Basic and acidic residues predominate over residues 997–1011 (ETNKENKDSNKENKD). Positions 1012–1056 (SSSNNNNNNNNNNNNNNNNNNNNNNNNNNNGNNNGNNSNNNSNSN) are enriched in low complexity. The C2 PI3K-type domain occupies 1099–1271 (VKRLFRVNIA…QPIILLVEFE (173 aa)). One can recognise a PIK helical domain in the interval 1326–1503 (PVGLKKLDLD…GLLLEGYLRS (178 aa)). A PI3K/PI4K catalytic domain is found at 1568–1845 (IIDKCRYMDS…NISVALNTKT (278 aa)). The G-loop stretch occupies residues 1574 to 1580 (YMDSKKL). The interval 1711–1719 (GIGDRHSDN) is catalytic loop. The activation loop stretch occupies residues 1730–1756 (HIDFGHFLGNYKKKYGFKRERAPFIFT).

This sequence belongs to the PI3/PI4-kinase family.

It catalyses the reaction a 1,2-diacyl-sn-glycero-3-phospho-(1D-myo-inositol) + ATP = a 1,2-diacyl-sn-glycero-3-phospho-(1D-myo-inositol-3-phosphate) + ADP + H(+). This Dictyostelium discoideum (Social amoeba) protein is Phosphatidylinositol 3-kinase 2 (pikB).